The primary structure comprises 556 residues: MRRFVYCKVVLATSLMWVLVDVFLLLYFSECNKCDDKKERSLLPALRAVISRNQEGPGEMGKAVLIPKDDQEKMKELFKINQFNLMASDLIALNRSLPDVRLEGCKTKVYPDELPNTSVVIVFHNEAWSTLLRTVYSVINRSPHYLLSEVILVDDASERDFLKLTLENYVKTLEVPVKIIRMEERSGLIRARLRGAAASKGQVITFLDAHCECTLGWLEPLLARIKEDRKTVVCPIIDVISDDTFEYMAGSDMTYGGFNWKLNFRWYPVPQREMDRRKGDRTLPVRTPTMAGGLFSIDRNYFEEIGTYDAGMDIWGGENLEMSFRIWQCGGSLEIVTCSHVGHVFRKATPYTFPGGTGHVINKNNRRLAEVWMDEFKDFFYIISPGVVKVDYGDVSVRKTLRENLKCKPFSWYLENIYPDSQIPRRYYSLGEIRNVETNQCLDNMGRKENEKVGIFNCHGMGGNQVFSYTADKEIRTDDLCLDVSRLSGPVIMLKCHHMRGNQLWEYDAERLTLRHANSNQCLDEPSEEDKMVPTMQDCSGSRSQQWLLRNMTLGT.

Topologically, residues 1–4 (MRRF) are cytoplasmic. The helical; Signal-anchor for type II membrane protein transmembrane segment at 5–27 (VYCKVVLATSLMWVLVDVFLLLY) threads the bilayer. Over 28–556 (FSECNKCDDK…WLLRNMTLGT (529 aa)) the chain is Lumenal. N94 and N116 each carry an N-linked (GlcNAc...) asparagine glycan. Intrachain disulfides connect C105–C338, C329–C407, C441–C458, C481–C496, and C522–C539. Residues 114 to 224 (LPNTSVVIVF…LGWLEPLLAR (111 aa)) are catalytic subdomain A. Substrate-binding residues include D155 and R185. D208 and H210 together coordinate Mn(2+). The catalytic subdomain B stretch occupies residues 284 to 346 (PVRTPTMAGG…TCSHVGHVFR (63 aa)). W315 is a substrate binding site. H343 lines the Mn(2+) pocket. Substrate contacts are provided by R346 and Y351. The 123-residue stretch at 428–550 (YSLGEIRNVE…GSRSQQWLLR (123 aa)) folds into the Ricin B-type lectin domain. The N-linked (GlcNAc...) asparagine glycan is linked to N551.

This sequence belongs to the glycosyltransferase 2 family. GalNAc-T subfamily. Mn(2+) serves as cofactor. Specifically expressed in neuronal cells. Not expressed in glial cells such as astrocytes. Expressed at low level.

Its subcellular location is the golgi apparatus membrane. It catalyses the reaction L-seryl-[protein] + UDP-N-acetyl-alpha-D-galactosamine = a 3-O-[N-acetyl-alpha-D-galactosaminyl]-L-seryl-[protein] + UDP + H(+). The enzyme catalyses L-threonyl-[protein] + UDP-N-acetyl-alpha-D-galactosamine = a 3-O-[N-acetyl-alpha-D-galactosaminyl]-L-threonyl-[protein] + UDP + H(+). Its pathway is protein modification; protein glycosylation. Its function is as follows. Catalyzes the initial reaction in O-linked oligosaccharide biosynthesis, the transfer of an N-acetyl-D-galactosamine (GalNAc) residue from UDP-GalNAc to a serine or threonine residue on the protein receptor. Generates GalNAc-O-Ser/Thr structure also known as Tn antigen, which itself is immunogenic but also serves as a precursor for the synthesis of different mucin-type O-glycan core structures. Contributes to the synthesis of O-linked glycans on mucins and proteoglycans of the central nervous system. Can glycosylate both unmodified peptides and glycopeptides that already contain an O-linked GalNAc sugar. Transfers GalNAc to Thr-/Ser-rich tandem repeats GTTPSPVPTTSTTSAP of MUC5AC. Transfers GalNAc to three consecutive serine/threonine residues on SDC3 forming a triplet-Tn epitope expressed in Purkinje cells of the developing brain. May promote neurogenesis through glycosylation and stabilization of PDPN. This chain is Polypeptide N-acetylgalactosaminyltransferase 13 (Galnt13), found in Mus musculus (Mouse).